The following is a 625-amino-acid chain: Chromatin structure-remodeling complex subunit RSC4 (625 aa).

The interval 1-35 (MVVKKRKLATEAGGSDERPKYLPGKHPKNQEKTPH) is disordered. 2 Bromo domains span residues 53-158 (WHIP…VLKA) and 181-292 (KLVD…IQKE). Residues serine 199 and serine 545 each carry the phosphoserine modification. Positions 536 to 552 (RTSNVNSNLSQPQQQEN) are enriched in polar residues. The segment at 536-555 (RTSNVNSNLSQPQQQENDVI) is disordered.

In terms of assembly, component of the two forms of the RSC complex composed of at least either RSC1 or RSC2, and ARP7, ARP9, LDB7, NPL6, RSC3, RSC30, RSC4, RSC58, RSC6, RSC8, RSC9, SFH1, STH1, HTL1 and probably RTT102. The complexes interact with histone and histone variant components of centromeric chromatin.

It is found in the nucleus. In terms of biological role, component of the chromatin structure remodeling complex (RSC), which is involved in transcription regulation and nucleosome positioning. RSC is responsible for the transfer of a histone octamer from a nucleosome core particle to naked DNA. The reaction requires ATP and involves an activated RSC-nucleosome intermediate. Remodeling reaction also involves DNA translocation, DNA twist and conformational change. As a reconfigurer of centromeric and flanking nucleosomes, RSC complex is required both for proper kinetochore function in chromosome segregation and, via a PKC1-dependent signaling pathway, for organization of the cellular cytoskeleton. The protein is Chromatin structure-remodeling complex subunit RSC4 (RSC4) of Saccharomyces cerevisiae (strain ATCC 204508 / S288c) (Baker's yeast).